The primary structure comprises 259 residues: MFFVLSPAKNLNEKDPCPVSEFTQPDLLAESEILMRQLRELAPQQIAELMHVSDKIALLNAERNAAWHTPFTPENAKQAVFMFNGDVYEGMDANTLNTNQIQYLQNHVRLLSGLYGLMRPLDLMQPYRLEMGTAFANLRGKNLYEFWGDIITNLLNDTLAQAGSNTLVNLASQEYFKSVNTKKLRARLITPIFKDEKNGKYKIISFYAKRARGLMVRYAAEHNITDPEMLKNFNYEGYAFNDAASNESEWVFMRSEQIK.

The protein belongs to the UPF0246 family.

This Neisseria gonorrhoeae (strain NCCP11945) protein is UPF0246 protein NGK_0633.